The sequence spans 597 residues: Leukocyte immunoglobulin-like receptor subfamily B member 2 (597 aa).

The N-terminal stretch at 1–21 (MTPIVTVLICLGLSLGPRTRV) is a signal peptide. Residues 22–460 (QTGTIPKPTL…QSGLGRHLGV (439 aa)) lie on the Extracellular side of the membrane. Ig-like C2-type domains lie at 27 to 110 (PKPT…SELS), 111 to 229 (DPLV…SLSV), 230 to 318 (QPGP…ILIT), and 330 to 419 (QPGP…LVVS). Intrachain disulfides connect Cys49/Cys98, Cys144/Cys196, Cys156/Cys166, and Cys245/Cys296. N-linked (GlcNAc...) asparagine glycosylation is found at Asn280, Asn301, and Asn340. Cys345 and Cys396 are oxidised to a cystine. The tract at residues 417–451 (VVSGPSMGSSPPPTGPISTPGPEDQPLTPTGSDPQ) is disordered. The helical transmembrane segment at 461 to 481 (VIGILVAVVLLLLLLLLLFLI) threads the bilayer. At 482-597 (LRHRRQGKHW…PSIYATLAIH (116 aa)) the chain is on the cytoplasmic side. Residues 491-523 (WTSTQRKADFQHPAGAVGPEPTDRGLQWRSSPA) form a disordered region. 3 short sequence motifs (ITIM motif) span residues 530–535 (NLYAAV), 559–564 (VTYAQL), and 589–594 (SIYATL). The tract at residues 537 to 597 (DTQPEDGVEM…PSIYATLAIH (61 aa)) is disordered.

In terms of assembly, binds PTPN6 when phosphorylated. Binds FCGR1A. Interacts with peptide-bound HLA-G-B2M; this interaction is direct. Interacts with peptide-bound HLA-F-B2M; this interaction is direct. Phosphorylated on tyrosine residues. Dephosphorylated by PTPN6. As to expression, expressed in monocytes and at lower levels in myeloid and plasmacytoid dendritic cells. Expressed in tolerogenic IL10-producing dendritic cells. Expressed in myeloid-derived suppressor cells during pregnancy. Detected at low levels in natural killer (NK) cells. Expressed in B cells.

Its subcellular location is the cell membrane. Functionally, receptor for class I MHC antigens. Recognizes a broad spectrum of HLA-A, HLA-B, HLA-C, HLA-G and HLA-F alleles. Involved in the down-regulation of the immune response and the development of tolerance. Recognizes HLA-G in complex with B2M/beta-2 microglobulin and a nonamer self-peptide (peptide-bound HLA-G-B2M) triggering differentiation of type 1 regulatory T cells and myeloid-derived suppressor cells, both of which actively maintain maternal-fetal tolerance. Competes with CD8A for binding to class I MHC antigens. Inhibits FCGR1A-mediated phosphorylation of cellular proteins and mobilization of intracellular calcium ions. This is Leukocyte immunoglobulin-like receptor subfamily B member 2 from Homo sapiens (Human).